Reading from the N-terminus, the 102-residue chain is Citrate lyase acyl carrier protein (102 aa).

O-(phosphoribosyl dephospho-coenzyme A)serine is present on Ser14.

The protein belongs to the CitD family. Oligomer with a subunit composition of (alpha,beta,gamma)6.

The protein resides in the cytoplasm. In terms of biological role, covalent carrier of the coenzyme of citrate lyase. This is Citrate lyase acyl carrier protein from Streptococcus equi subsp. zooepidemicus (strain H70).